The primary structure comprises 332 residues: Heterogeneous nuclear ribonucleoprotein A/B (332 aa).

A disordered region spans residues 1–66 (MSEAGEEQPM…DQINASKNEE (66 aa)). Residues 29 to 49 (GRGWTGAAAGAGGATAAPPSG) are compositionally biased toward low complexity. RRM domains follow at residues 69–154 (GKMF…PVKK) and 153–233 (KKIF…QPKE). Serine 81 bears the Phosphoserine mark. Residues lysine 130 and lysine 203 each participate in a glycyl lysine isopeptide (Lys-Gly) (interchain with G-Cter in SUMO2) cross-link. Lysine 215 is subject to N6-acetyllysine. Residues 235–268 (YQQQQYGSGGRGNRNRGNRGSGGGGGGGGQSQSW) form a disordered region. Phosphoserine is present on serine 242. Arginine 245 carries the post-translational modification Dimethylated arginine; alternate. Arginine 245 bears the Omega-N-methylarginine; alternate mark. Omega-N-methylarginine occurs at positions 250, 251, 253, and 254. A compositionally biased stretch (gly residues) spans 253–264 (RGSGGGGGGGGQ). Phosphoserine occurs at positions 255 and 256. 3 positions are modified to N6-acetyllysine: glycine 271, tyrosine 272, and lysine 318. The disordered stretch occupies residues 311-332 (QGSTNYGKSQRRGGHQNNYKPY). Dimethylated arginine; alternate is present on arginine 322. An Omega-N-methylarginine; alternate modification is found at arginine 322. Arginine 322 carries the post-translational modification Asymmetric dimethylarginine; alternate.

As to quaternary structure, identified in a IGF2BP1-dependent mRNP granule complex containing untranslated mRNAs. Interacts with APOBEC1. In terms of processing, dimethylation at Arg-322 is probably asymmetric. In terms of tissue distribution, ubiquitous.

It is found in the nucleus. The protein localises to the cytoplasm. Binds single-stranded RNA. Has a high affinity for G-rich and U-rich regions of hnRNA. Also binds to APOB mRNA transcripts around the RNA editing site. The protein is Heterogeneous nuclear ribonucleoprotein A/B (HNRNPAB) of Homo sapiens (Human).